Here is a 503-residue protein sequence, read N- to C-terminus: E3 ubiquitin-protein ligase IE61 (503 aa).

Residues 19–58 (CAICMSAISGLGKTLPCLHDFCFVCIQTWTSTSAQCPLCR) form an RING-type zinc finger. 3 disordered regions span residues 175–194 (AVIT…PSSR), 367–418 (SGPI…LFVD), and 445–503 (AALP…VRRK). Positions 375-388 (GGSTSQDTSVSNIH) are enriched in polar residues. The span at 389–403 (RSPPGGSSTQPSSGR) shows a compositional bias: low complexity. The span at 404 to 414 (RPGRPKGVKRR) shows a compositional bias: basic residues. The span at 471–480 (PSTSGSSPSP) shows a compositional bias: low complexity.

Interacts with host BTRC; this interaction seems to inactivate SCF-mediated protein degradation in general.

It catalyses the reaction S-ubiquitinyl-[E2 ubiquitin-conjugating enzyme]-L-cysteine + [acceptor protein]-L-lysine = [E2 ubiquitin-conjugating enzyme]-L-cysteine + N(6)-ubiquitinyl-[acceptor protein]-L-lysine.. Its function is as follows. RING-finger E3 ubiquitin ligase that degrades host SP100, one of the major components of ND10 nuclear bodies, thereby disrupting the organization of these bodies. Also plays a role in the inhibition of host NF-kappa-B pathway by blocking the SCF(BTRC)-mediated addition of ubiquitin chains to host IkappaBalpha/NFKBIA, thereby interfering with its degradation. The protein is E3 ubiquitin-protein ligase IE61 of Cercopithecine herpesvirus 9 (strain DHV) (CeHV-9).